The chain runs to 241 residues: Zinc finger CCHC domain-containing protein 24 (241 aa).

Phosphoserine occurs at positions 65 and 93. Residues 132-149 form a CCHC-type zinc finger; it reads YLCHLCFNKGHYIKDCPQ.

The polypeptide is Zinc finger CCHC domain-containing protein 24 (ZCCHC24) (Macaca fascicularis (Crab-eating macaque)).